The following is a 610-amino-acid chain: MIQVLLVTICLAAFPYQGSSIILESGNVNDYEVVYPRKVTALPKGAVQPKYEDAMQYEFKVNGEPVVLHLEKNKGLFSKDYSETHYSPDGREITTYPAVEDHCYYHGRIENDADSTASISACNGLKGHFKLQRETYFIEPLKLSNSEAHAVFKYENVEKEDEAPKMCGVTQNWKSYEPIKKASQLVVTAEQQKYNPFRYVELFIVVDQEMVTKNNGDLDKIKARMYELANIVNEILRYLYMHAALVGLEIWSNGDKITVKPDVDYTLNSFAEWRKTDLLTRKKHDNAQLLTAIDFNGPTIGYAYIGSMCHPKRSVAIVEDYSPINLVVAVIMAHEMGHNLGIHHDTDFCSCGDYPCIMGPTISNEPSKFFSNCSYIQCWDFIMKENPQCILNEPLGTDIVSPPVCGNELLEVGEECDCGTPENCQNECCDAATCKLKSGSQCGHGDCCEQCKFSKSGTECRASMSECDPAEHCTGQSSECPADVFHKNGQPCLDNYGYCYNGNCPIMYHQCYALFGADVYEAEDSCFKDNQKGNYYGYCRKENGKKIPCAPEDVKCGRLYCKDNSPGQNNPCKMFYSNDDEHKGMVLPGTKCADGKVCSNGHCVDVATAY.

An N-terminal signal peptide occupies residues methionine 1–serine 20. Positions isoleucine 21–alanine 189 are excised as a propeptide. Residues arginine 198 to proline 394 form the Peptidase M12B domain. Positions 201 and 285 each coordinate Ca(2+). Disulfide bonds link cysteine 309/cysteine 389, cysteine 349/cysteine 373, and cysteine 351/cysteine 356. Histidine 334 provides a ligand contact to Zn(2+). Glutamate 335 is a catalytic residue. Zn(2+) contacts are provided by histidine 338 and histidine 344. N-linked (GlcNAc...) asparagine glycosylation occurs at asparagine 372. Cysteine 389, asparagine 392, valine 404, asparagine 407, leucine 409, glutamate 411, glutamate 414, and aspartate 417 together coordinate Ca(2+). One can recognise a Disintegrin domain in the interval proline 402–asparagine 488. 14 disulfides stabilise this stretch: cysteine 405–cysteine 434, cysteine 416–cysteine 429, cysteine 418–cysteine 424, cysteine 428–cysteine 451, cysteine 442–cysteine 448, cysteine 447–cysteine 473, cysteine 460–cysteine 480, cysteine 467–cysteine 499, cysteine 492–cysteine 504, cysteine 511–cysteine 561, cysteine 526–cysteine 572, cysteine 539–cysteine 549, cysteine 556–cysteine 598, and cysteine 592–cysteine 603. The D/ECD-tripeptide signature appears at glutamate 466–aspartate 468. Ca(2+)-binding residues include aspartate 468, proline 469, glutamate 471, aspartate 483, and valine 484.

Belongs to the venom metalloproteinase (M12B) family. P-III subfamily. P-IIIa sub-subfamily. In terms of assembly, monomer. It depends on Zn(2+) as a cofactor. In terms of tissue distribution, expressed by the venom gland.

It is found in the secreted. Functionally, snake venom metalloproteinase that impairs hemostasis in the envenomed animal. In Bothrops insularis (Golden lancehead), this protein is Zinc metalloproteinase-disintegrin-like BITM06A.